Consider the following 339-residue polypeptide: Anthranilate phosphoribosyltransferase (339 aa).

Residues G82, 85-86 (GD), 92-95 (NIST), 110-118 (KHGNSSISS), and S122 each bind 5-phospho-alpha-D-ribose 1-diphosphate. G82 is a binding site for anthranilate. S94 is a binding site for Mg(2+). N113 contacts anthranilate. R168 contacts anthranilate. Residues D227 and E228 each contribute to the Mg(2+) site.

It belongs to the anthranilate phosphoribosyltransferase family. In terms of assembly, homodimer. Requires Mg(2+) as cofactor.

It carries out the reaction N-(5-phospho-beta-D-ribosyl)anthranilate + diphosphate = 5-phospho-alpha-D-ribose 1-diphosphate + anthranilate. Its pathway is amino-acid biosynthesis; L-tryptophan biosynthesis; L-tryptophan from chorismate: step 2/5. Functionally, catalyzes the transfer of the phosphoribosyl group of 5-phosphorylribose-1-pyrophosphate (PRPP) to anthranilate to yield N-(5'-phosphoribosyl)-anthranilate (PRA). This is Anthranilate phosphoribosyltransferase from Ruthia magnifica subsp. Calyptogena magnifica.